The primary structure comprises 259 residues: Tumor necrosis factor receptor superfamily member 10C (259 aa).

A signal peptide spans 1–25; that stretch reads MARIPKTLKFVVVIVAVLLPVLAYS. 3 TNFR-Cys repeats span residues 29–66, 69–109, and 110–149; these read ARQEEVPQQTVAPQQQRHSFKGEECPAGSHRSEHTGAC, CTEG…DTVC, and QCKEGTFRNENSPEMCRKCSRCPSGEVQVSNCTSWDDIQC. The span at 30-45 shows a compositional bias: polar residues; the sequence is RQEEVPQQTVAPQQQR. A disordered region spans residues 30 to 56; it reads RQEEVPQQTVAPQQQRHSFKGEECPAG. 7 disulfide bridges follow: Cys53–Cys66, Cys69–Cys85, Cys88–Cys101, Cys91–Cys109, Cys111–Cys125, Cys128–Cys141, and Cys131–Cys149. Asn77 is a glycosylation site (N-linked (GlcNAc...) (high mannose) asparagine). Asn140 and Asn156 each carry an N-linked (GlcNAc...) (high mannose) asparagine glycan. The interval 160 to 224 is disordered; sequence ETPAAEETMN…TSPGTPAPAA (65 aa). TAPE repeat units follow at residues 162-176, 177-191, 192-206, 207-221, and 222-236; these read PAAEETMNTSPGTPA, PAAEETMTTSPGTPA, and PAAEETMITSPGTPA. A compositionally biased stretch (low complexity) spans 185 to 217; the sequence is TSPGTPAPAAEETMTTSPGTPAPAAEETMTTSP. A lipid anchor (GPI-anchor amidated alanine) is attached at Ala236. The propeptide at 237–259 is removed in mature form; the sequence is SSHYLSCTIVGIIVLIVLLIVFV.

N-glycosylated and O-glycosylated. Higher expression in normal tissues than in tumor cell lines. Highly expressed in peripheral blood lymphocytes, spleen, skeletal muscle, placenta, lung and heart.

It is found in the cell membrane. Its function is as follows. Receptor for the cytotoxic ligand TRAIL. Lacks a cytoplasmic death domain and hence is not capable of inducing apoptosis. May protect cells against TRAIL mediated apoptosis by competing with TRAIL-R1 and R2 for binding to the ligand. In Homo sapiens (Human), this protein is Tumor necrosis factor receptor superfamily member 10C (TNFRSF10C).